The primary structure comprises 234 residues: MLFSPPLQRATLIQRYKRFLADVITPDGTTLTLHCPNTGAMTGCATPGDTVWYSTSENTKRKYPHTWELTETQSGAFICVNTLRANQLTKEAIQENRLPALAGYNILNSEVKYGAERSRIDFMLQADFRPDCYIEVKSVTLAEKENGYFPDAITERGQKHLRELMGVAAAGHRAVVVFAVLHSAITRFSPARHIDIKYAQLLSEAQNKGVEVLAYKAELSATKMELNEPVPITL.

A DNA-binding region (H-T-H motif) is located at residues 201-220 (LLSEAQNKGVEVLAYKAELS).

This sequence belongs to the SfsA family.

Functionally, binds to DNA non-specifically. Could be a regulatory factor involved in maltose metabolism. In Salmonella typhi, this protein is Sugar fermentation stimulation protein A.